Consider the following 418-residue polypeptide: Glutamyl-tRNA reductase (418 aa).

Substrate-binding positions include 49 to 52 (TCNR), Ser-109, 114 to 116 (EPQ), and Gln-120. Cys-50 serves as the catalytic Nucleophile. An NADP(+)-binding site is contributed by 189 to 194 (GAGETI).

Belongs to the glutamyl-tRNA reductase family. As to quaternary structure, homodimer.

It carries out the reaction (S)-4-amino-5-oxopentanoate + tRNA(Glu) + NADP(+) = L-glutamyl-tRNA(Glu) + NADPH + H(+). The protein operates within porphyrin-containing compound metabolism; protoporphyrin-IX biosynthesis; 5-aminolevulinate from L-glutamyl-tRNA(Glu): step 1/2. Its function is as follows. Catalyzes the NADPH-dependent reduction of glutamyl-tRNA(Glu) to glutamate 1-semialdehyde (GSA). The polypeptide is Glutamyl-tRNA reductase (Escherichia fergusonii (strain ATCC 35469 / DSM 13698 / CCUG 18766 / IAM 14443 / JCM 21226 / LMG 7866 / NBRC 102419 / NCTC 12128 / CDC 0568-73)).